Reading from the N-terminus, the 305-residue chain is Dihydroorotate dehydrogenase B (NAD(+)), catalytic subunit (305 aa).

FMN is bound by residues Ser-23 and 47 to 48 (KG). Substrate contacts are provided by residues Lys-47 and 71-75 (NAIGL). Residues Asn-101 and Asn-129 each coordinate FMN. Substrate is bound at residue Asn-129. Cys-132 serves as the catalytic Nucleophile. Positions 167 and 193 each coordinate FMN. 194-195 (NT) contributes to the substrate binding site. Residues Gly-219, 245–246 (GG), and 267–268 (GT) each bind FMN.

The protein belongs to the dihydroorotate dehydrogenase family. Type 1 subfamily. As to quaternary structure, heterotetramer of 2 PyrK and 2 PyrD type B subunits. FMN serves as cofactor.

It localises to the cytoplasm. The enzyme catalyses (S)-dihydroorotate + NAD(+) = orotate + NADH + H(+). It functions in the pathway pyrimidine metabolism; UMP biosynthesis via de novo pathway; orotate from (S)-dihydroorotate (NAD(+) route): step 1/1. Catalyzes the conversion of dihydroorotate to orotate with NAD(+) as electron acceptor. This is Dihydroorotate dehydrogenase B (NAD(+)), catalytic subunit (pyrD) from Geobacter sulfurreducens (strain ATCC 51573 / DSM 12127 / PCA).